The following is a 334-amino-acid chain: Cathepsin J (334 aa).

The N-terminal stretch at 1 to 17 is a signal peptide; that stretch reads MTPAVFLVILCFGVASG. A propeptide spans 18–113 (activation peptide); the sequence is APARDPNLDA…PSAQKQVSIG (96 aa). The active site involves cysteine 138. 3 N-linked (GlcNAc...) asparagine glycosylation sites follow: asparagine 217, asparagine 221, and asparagine 268. An intrachain disulfide couples cysteine 269 to cysteine 322. The active site involves histidine 276. The N-linked (GlcNAc...) asparagine glycan is linked to asparagine 288. Asparagine 300 is a catalytic residue.

This sequence belongs to the peptidase C1 family. In terms of tissue distribution, expressed specifically in placenta.

Its subcellular location is the lysosome. In Rattus norvegicus (Rat), this protein is Cathepsin J (Ctsj).